The primary structure comprises 445 residues: tRNA-2-methylthio-N(6)-dimethylallyladenosine synthase (445 aa).

Positions 3-124 (KKLYIKTYGC…LPELISKVVR (122 aa)) constitute an MTTase N-terminal domain. [4Fe-4S] cluster is bound by residues cysteine 12, cysteine 48, cysteine 87, cysteine 162, cysteine 166, and cysteine 169. One can recognise a Radical SAM core domain in the interval 148-380 (YPQGASSFIS…QQELTAQQLA (233 aa)). In terms of domain architecture, TRAM spans 383 to 445 (ESCVGSIMKV…ASNSLTGEVI (63 aa)).

Belongs to the methylthiotransferase family. MiaB subfamily. As to quaternary structure, monomer. It depends on [4Fe-4S] cluster as a cofactor.

It localises to the cytoplasm. The enzyme catalyses N(6)-dimethylallyladenosine(37) in tRNA + (sulfur carrier)-SH + AH2 + 2 S-adenosyl-L-methionine = 2-methylsulfanyl-N(6)-dimethylallyladenosine(37) in tRNA + (sulfur carrier)-H + 5'-deoxyadenosine + L-methionine + A + S-adenosyl-L-homocysteine + 2 H(+). Its function is as follows. Catalyzes the methylthiolation of N6-(dimethylallyl)adenosine (i(6)A), leading to the formation of 2-methylthio-N6-(dimethylallyl)adenosine (ms(2)i(6)A) at position 37 in tRNAs that read codons beginning with uridine. In Rickettsia felis (strain ATCC VR-1525 / URRWXCal2) (Rickettsia azadi), this protein is tRNA-2-methylthio-N(6)-dimethylallyladenosine synthase.